Reading from the N-terminus, the 162-residue chain is Ribosome maturation factor RimP (162 aa).

It belongs to the RimP family.

The protein localises to the cytoplasm. Functionally, required for maturation of 30S ribosomal subunits. The sequence is that of Ribosome maturation factor RimP from Leptospira borgpetersenii serovar Hardjo-bovis (strain JB197).